The following is a 465-amino-acid chain: Peptidoglycan glycosyltransferase RodA (465 aa).

13 helical membrane passes run 21–41 (AELLLLGFAAVITVAALAIVE), 50–70 (WYLAGYGLIFWSLFASAHLAI), 76–96 (YTDPLLLPIVALLNGLGLVMI), 115–135 (AQQMLWTLVGVAAFVLVMTVL), 144–164 (YGYISGLTGLVFLAIPAPLPE), 179–199 (IQPAEFSKILLLIFFAAVLVA), 222–242 (LAPLLAAWVISVSVMVFEKDL), 243–263 (GTSLLLYASFLVVVYLATQRL), 264–284 (SWVIIGLVLFTAGSTIAYFTF), 308–328 (IVQSLFSFATGGIFGTGLGNG), 340–360 (FIIAVFGEELGLVGLAALLML), 382–402 (LLAAGLASTLAIQLFIVSGGV), and 414–434 (PWMSYGGSSLLANYVLLAILA).

Belongs to the SEDS family.

The protein resides in the cell inner membrane. The catalysed reaction is [GlcNAc-(1-&gt;4)-Mur2Ac(oyl-L-Ala-gamma-D-Glu-L-Lys-D-Ala-D-Ala)](n)-di-trans,octa-cis-undecaprenyl diphosphate + beta-D-GlcNAc-(1-&gt;4)-Mur2Ac(oyl-L-Ala-gamma-D-Glu-L-Lys-D-Ala-D-Ala)-di-trans,octa-cis-undecaprenyl diphosphate = [GlcNAc-(1-&gt;4)-Mur2Ac(oyl-L-Ala-gamma-D-Glu-L-Lys-D-Ala-D-Ala)](n+1)-di-trans,octa-cis-undecaprenyl diphosphate + di-trans,octa-cis-undecaprenyl diphosphate + H(+). The protein operates within cell wall biogenesis; peptidoglycan biosynthesis. Functionally, transglycosylase involved in peptidoglycan cell wall formation. Required for the regulation of cell length. This Mycobacterium leprae (strain TN) protein is Peptidoglycan glycosyltransferase RodA (rodA).